Reading from the N-terminus, the 100-residue chain is Sodium-influx-stimulating peptide (100 aa).

Positions 1–23 (MLSSVALRYLLVLSLAFLAVVTS) are cleaved as a signal peptide.

In terms of processing, three disulfide bonds are present. In terms of tissue distribution, expressed by the yellow cells, peptidergic (neuroendocrine) neurons of the central nervous system.

In terms of biological role, stimulates integumental Na(+) uptake. Controls the activity of sodium pumps in the integument, pericardium, ureter and nephridial gland. The chain is Sodium-influx-stimulating peptide (SIS) from Lymnaea stagnalis (Great pond snail).